The sequence spans 485 residues: Glutamyl-tRNA(Gln) amidotransferase subunit A (485 aa).

Catalysis depends on charge relay system residues Lys-78 and Ser-153. The active-site Acyl-ester intermediate is the Ser-177.

This sequence belongs to the amidase family. GatA subfamily. Heterotrimer of A, B and C subunits.

The catalysed reaction is L-glutamyl-tRNA(Gln) + L-glutamine + ATP + H2O = L-glutaminyl-tRNA(Gln) + L-glutamate + ADP + phosphate + H(+). Its function is as follows. Allows the formation of correctly charged Gln-tRNA(Gln) through the transamidation of misacylated Glu-tRNA(Gln) in organisms which lack glutaminyl-tRNA synthetase. The reaction takes place in the presence of glutamine and ATP through an activated gamma-phospho-Glu-tRNA(Gln). The polypeptide is Glutamyl-tRNA(Gln) amidotransferase subunit A (Bacillus mycoides (strain KBAB4) (Bacillus weihenstephanensis)).